A 142-amino-acid chain; its full sequence is Large ribosomal subunit protein uL11 (142 aa).

This sequence belongs to the universal ribosomal protein uL11 family. In terms of assembly, part of the ribosomal stalk of the 50S ribosomal subunit. Interacts with L10 and the large rRNA to form the base of the stalk. L10 forms an elongated spine to which L12 dimers bind in a sequential fashion forming a multimeric L10(L12)X complex. One or more lysine residues are methylated.

Forms part of the ribosomal stalk which helps the ribosome interact with GTP-bound translation factors. This is Large ribosomal subunit protein uL11 from Mycobacterium sp. (strain JLS).